Consider the following 445-residue polypeptide: Putative MgpC-like protein MPN_464 (445 aa).

Residues 23 to 44 (STTVAVQKSDSSGSQGQGTTDN) form a disordered region. The span at 31–43 (SDSSGSQGQGTTD) shows a compositional bias: low complexity.

The protein belongs to the MgpC family.

This chain is Putative MgpC-like protein MPN_464, found in Mycoplasma pneumoniae (strain ATCC 29342 / M129 / Subtype 1) (Mycoplasmoides pneumoniae).